The following is an 852-amino-acid chain: Nucleolar protein 14 homolog (852 aa).

The interval 1 to 40 (MVAKGKKASADAVYAKKTTRSANPFDNSTAQSSKRGNPFD) is disordered. A compositionally biased stretch (polar residues) spans 20 to 35 (RSANPFDNSTAQSSKR). Residues 190–221 (IDEMIVEQKRRKNEIAKEKDEVYDLTEKLDAN) are a coiled coil. Disordered stretches follow at residues 288–324 (RRMR…GEDD) and 338–410 (LGTH…KSAD). A compositionally biased stretch (basic and acidic residues) spans 344–353 (GKKEAVLKGD). The segment covering 354–381 (ENEDDDDKEGEEEEEEDSDEESDSEVDN) has biased composition (acidic residues). Residues 774–851 (KMSKAKEERA…ELSRAKKKKK (78 aa)) are a coiled coil.

It belongs to the NOP14 family. Component of the ribosomal small subunit (SSU) processome.

The protein resides in the nucleus. Its subcellular location is the nucleolus. Its function is as follows. Involved in nucleolar processing of pre-18S ribosomal RNA. Has a role in the nuclear export of 40S pre-ribosomal subunit to the cytoplasm. This chain is Nucleolar protein 14 homolog (l(3)07882), found in Drosophila melanogaster (Fruit fly).